We begin with the raw amino-acid sequence, 322 residues long: Daunorubicin resistance ATP-binding protein DrrA2 (322 aa).

Positions 6-236 constitute an ABC transporter domain; sequence VRAEAMEKRY…VGGDRIEVVV (231 aa). 38 to 45 contributes to the ATP binding site; sequence GPNGAGKT.

It belongs to the ABC transporter superfamily. Drug exporter-1 (DrugE1) (TC 3.A.1.105) family. The complex is probably composed of two ATP-binding proteins (DrrA2) and two transmembrane proteins (DrrB2).

It localises to the cell membrane. It carries out the reaction daunorubicin(in) + ATP + H2O = daunorubicin(out) + ADP + phosphate + H(+). In terms of biological role, part of the ABC transporter complex DrrA2B2 involved in daunorubicin efflux. Responsible for energy coupling to the transport system. Confers self-resistance to daunorubicin, an antibiotic produced by S.coeruleorubidus. This Streptomyces coeruleorubidus protein is Daunorubicin resistance ATP-binding protein DrrA2.